Here is a 282-residue protein sequence, read N- to C-terminus: MTASHIDYTIRYAVDPAAAARMDTDALRANFHIGDLFRQGRISLTYSHYDRMIVGGAMPVDKPLALETIRPTGTARFLERRELIAVNIGGPGRIEMNGESFRLEPRDMAYAGMGEDVTFSSEDPAVPAKFYLLSAPAHQALPRRHIRIGDAKRLDLGSAATSNERSIFQFIHPEGVKTCQLVVGMTQLAPGSVWNTMPCHVHDRRMEAYLYFDLDDSARVLHLMGEPSETRHIVMAREEAVLSPPWSIHSGCGTANYAFIWAMAGDNIDYTDVEMVPMETLR.

Zn(2+)-binding residues include histidine 200, histidine 202, glutamate 207, and histidine 249.

Belongs to the KduI family. The cofactor is Zn(2+).

It catalyses the reaction 5-dehydro-4-deoxy-D-glucuronate = 3-deoxy-D-glycero-2,5-hexodiulosonate. The protein operates within glycan metabolism; pectin degradation; 2-dehydro-3-deoxy-D-gluconate from pectin: step 4/5. Catalyzes the isomerization of 5-dehydro-4-deoxy-D-glucuronate to 3-deoxy-D-glycero-2,5-hexodiulosonate. The sequence is that of 4-deoxy-L-threo-5-hexosulose-uronate ketol-isomerase 2 (kduI2) from Rhizobium meliloti (strain 1021) (Ensifer meliloti).